We begin with the raw amino-acid sequence, 101 residues long: Small ribosomal subunit protein uS14 (101 aa).

Belongs to the universal ribosomal protein uS14 family. As to quaternary structure, part of the 30S ribosomal subunit. Contacts proteins S3 and S10.

In terms of biological role, binds 16S rRNA, required for the assembly of 30S particles and may also be responsible for determining the conformation of the 16S rRNA at the A site. The chain is Small ribosomal subunit protein uS14 from Shewanella frigidimarina (strain NCIMB 400).